Consider the following 59-residue polypeptide: Large ribosomal subunit protein uL30 (59 aa).

It belongs to the universal ribosomal protein uL30 family. As to quaternary structure, part of the 50S ribosomal subunit.

The chain is Large ribosomal subunit protein uL30 from Aliivibrio fischeri (strain MJ11) (Vibrio fischeri).